We begin with the raw amino-acid sequence, 432 residues long: Serine hydroxymethyltransferase (432 aa).

(6S)-5,6,7,8-tetrahydrofolate contacts are provided by residues leucine 131 and 135-137 (GHL). The residue at position 240 (lysine 240) is an N6-(pyridoxal phosphate)lysine.

It belongs to the SHMT family. Homodimer. Requires pyridoxal 5'-phosphate as cofactor.

The protein localises to the cytoplasm. The enzyme catalyses (6R)-5,10-methylene-5,6,7,8-tetrahydrofolate + glycine + H2O = (6S)-5,6,7,8-tetrahydrofolate + L-serine. Its pathway is one-carbon metabolism; tetrahydrofolate interconversion. The protein operates within amino-acid biosynthesis; glycine biosynthesis; glycine from L-serine: step 1/1. Its function is as follows. Catalyzes the reversible interconversion of serine and glycine with tetrahydrofolate (THF) serving as the one-carbon carrier. This reaction serves as the major source of one-carbon groups required for the biosynthesis of purines, thymidylate, methionine, and other important biomolecules. Also exhibits THF-independent aldolase activity toward beta-hydroxyamino acids, producing glycine and aldehydes, via a retro-aldol mechanism. The chain is Serine hydroxymethyltransferase from Acidiphilium cryptum (strain JF-5).